Reading from the N-terminus, the 367-residue chain is Heme A synthase (367 aa).

The next 5 membrane-spanning stretches (helical) occupy residues 12-32, 99-119, 127-147, 163-183, and 198-218; these read GAVRTWLYVVAALVVAMVAVG, LLGRVIGLVFFLPLILFWWQG, LGLLGLGLLGGLQGAIGWIMV, LALHLTTASLILAGLVWLAAG, and ATALLLPILVLVQIFLGGLVA. Position 264 (His-264) interacts with heme. Transmembrane regions (helical) follow at residues 266-286, 296-316, and 317-337; these read VTAYLVFVVAVLHAVDARLTG, GVVILVLAQMALGIATLLLAV, and PLWAALAHQVLAMAVLTMATV. His-324 is a heme binding site.

This sequence belongs to the COX15/CtaA family. Type 2 subfamily. Interacts with CtaB. Heme b serves as cofactor.

It is found in the cell membrane. It carries out the reaction Fe(II)-heme o + 2 A + H2O = Fe(II)-heme a + 2 AH2. It functions in the pathway porphyrin-containing compound metabolism; heme A biosynthesis; heme A from heme O: step 1/1. Functionally, catalyzes the conversion of heme O to heme A by two successive hydroxylations of the methyl group at C8. The first hydroxylation forms heme I, the second hydroxylation results in an unstable dihydroxymethyl group, which spontaneously dehydrates, resulting in the formyl group of heme A. This Methylobacterium radiotolerans (strain ATCC 27329 / DSM 1819 / JCM 2831 / NBRC 15690 / NCIMB 10815 / 0-1) protein is Heme A synthase.